The following is a 281-amino-acid chain: Inositol diphosphatase SIW14 (281 aa).

A disordered region spans residues methionine 1–isoleucine 20. A compositionally biased stretch (basic and acidic residues) spans lysine 7–isoleucine 20. Serine 94 is subject to Phosphoserine. The Tyrosine-protein phosphatase domain occupies asparagine 121–alanine 271. Positions 189, 190, and 193 each coordinate 1D-myo-inositol hexakisphosphate. Residue cysteine 214 is the Phosphocysteine intermediate of the active site.

It belongs to the protein-tyrosine phosphatase family. Atypical dual-specificity phosphatase Siw14-like subfamily. In terms of assembly, monomer.

The protein localises to the cytoplasm. It catalyses the reaction 5-diphospho-1D-myo-inositol 1,2,3,4,6-pentakisphosphate + H2O = 1D-myo-inositol hexakisphosphate + phosphate + H(+). The enzyme catalyses 5-diphospho-1D-myo-inositol 1,3,4,6-tetrakisphosphate + H2O = 1D-myo-inositol 1,3,4,5,6-pentakisphosphate + phosphate + H(+). It carries out the reaction 3,5-bis(diphospho)-1D-myo-inositol 1,2,4,6-tetrakisphosphate + H2O = 3-diphospho-1D-myo-inositol 1,2,4,5,6-pentakisphosphate + phosphate + 2 H(+). The catalysed reaction is 1,5-bis(diphospho)-1D-myo-inositol 2,3,4,6-tetrakisphosphate + H2O = 1-diphospho-1D-myo-inositol 2,3,4,5,6-pentakisphosphate + phosphate + 2 H(+). It catalyses the reaction 6-diphospho-1D-myo-inositol pentakisphosphate + H2O = 1D-myo-inositol hexakisphosphate + phosphate + H(+). Functionally, selectively cleaves the beta-phosphate at the 5-position of soluble inositol pyrophosphates. Converts 5-diphosphoinositol tetrakisphosphate (5-PP-InsP(4)) into inositol pentakisphosphate (InsP(5)), 5-diphosphoinositol pentakisphosphate (5-PP-IP(5) or 5-InsP(7)) into inositol hexakisphosphate (IP(6) or InsP(6)), and 1,5-bisdiphosphoinositol tetrakisphosphate (1,5-PP-IP(5) or InsP(8)) into 1-diphosphoinositol pentakisphosphate (1-PP-IP(5) or 1-InsP(7)). Also has activity on 1,5-bis-diphosphoinositol 2,3,4,6-tetrakisphosphate (1,5-InsP(8)) and 3,5-InsP(8). Modulates inositol pyrophosphate metabolism that may have an influence in stress response. Plays a role in actin filament organization and endocytosis. Functions as a prion suppressing factor possibly due to its phosphatase activity against inositol pyrophosphates, which are signal transduction molecules involved in prion propagation. The sequence is that of Inositol diphosphatase SIW14 (SIW14) from Saccharomyces cerevisiae (strain ATCC 204508 / S288c) (Baker's yeast).